A 25-amino-acid polypeptide reads, in one-letter code: APVENQGSFPKMFPRGSHWAVGHLM.

Methionine 25 carries the methionine amide modification.

The protein belongs to the bombesin/neuromedin-B/ranatensin family.

It is found in the secreted. The protein resides in the cytoplasmic vesicle. It localises to the secretory vesicle lumen. In terms of biological role, stimulates the release of gastrin and other gastrointestinal hormones. The protein is Gastrin-releasing peptide (grp) of Scyliorhinus canicula (Small-spotted catshark).